The sequence spans 447 residues: Asparagine--tRNA ligase (447 aa).

This sequence belongs to the class-II aminoacyl-tRNA synthetase family. In terms of assembly, homodimer.

Its subcellular location is the cytoplasm. The enzyme catalyses tRNA(Asn) + L-asparagine + ATP = L-asparaginyl-tRNA(Asn) + AMP + diphosphate + H(+). This Streptococcus pneumoniae serotype 4 (strain ATCC BAA-334 / TIGR4) protein is Asparagine--tRNA ligase.